Reading from the N-terminus, the 228-residue chain is Lipoprotein-releasing system ATP-binding protein LolD (228 aa).

Residues 7 to 228 form the ABC transporter domain; sequence LNCQNLTKDY…MQDGVLRPEM (222 aa). 43-50 provides a ligand contact to ATP; the sequence is GSSGSGKS.

It belongs to the ABC transporter superfamily. Lipoprotein translocase (TC 3.A.1.125) family. In terms of assembly, the complex is composed of two ATP-binding proteins (LolD) and two transmembrane proteins (LolC and LolE).

It localises to the cell inner membrane. Its function is as follows. Part of the ABC transporter complex LolCDE involved in the translocation of mature outer membrane-directed lipoproteins, from the inner membrane to the periplasmic chaperone, LolA. Responsible for the formation of the LolA-lipoprotein complex in an ATP-dependent manner. This Mannheimia succiniciproducens (strain KCTC 0769BP / MBEL55E) protein is Lipoprotein-releasing system ATP-binding protein LolD.